A 188-amino-acid chain; its full sequence is Elongation factor P-like protein (188 aa).

The protein belongs to the elongation factor P family.

The protein is Elongation factor P-like protein of Vibrio vulnificus (strain CMCP6).